A 286-amino-acid polypeptide reads, in one-letter code: Bifunctional protein FolD (286 aa).

NADP(+) is bound by residues 165-167 (GRS), S190, and I231.

The protein belongs to the tetrahydrofolate dehydrogenase/cyclohydrolase family. Homodimer.

It catalyses the reaction (6R)-5,10-methylene-5,6,7,8-tetrahydrofolate + NADP(+) = (6R)-5,10-methenyltetrahydrofolate + NADPH. It carries out the reaction (6R)-5,10-methenyltetrahydrofolate + H2O = (6R)-10-formyltetrahydrofolate + H(+). Its pathway is one-carbon metabolism; tetrahydrofolate interconversion. Functionally, catalyzes the oxidation of 5,10-methylenetetrahydrofolate to 5,10-methenyltetrahydrofolate and then the hydrolysis of 5,10-methenyltetrahydrofolate to 10-formyltetrahydrofolate. In Thermodesulfovibrio yellowstonii (strain ATCC 51303 / DSM 11347 / YP87), this protein is Bifunctional protein FolD.